Reading from the N-terminus, the 61-residue chain is Bowman-Birk type proteinase inhibitor (61 aa).

Intrachain disulfides connect Cys4–Cys57, Cys5–Cys20, Cys8–Cys53, Cys10–Cys18, Cys27–Cys34, Cys31–Cys46, and Cys36–Cys44.

It belongs to the Bowman-Birk serine protease inhibitor family.

Its function is as follows. Strong inhibitor of trypsin with a 1:1 stoichiometry. Weaker inhibitor of chymotrypsin. In Erythrina variegata (Indian coral tree), this protein is Bowman-Birk type proteinase inhibitor.